The following is a 539-amino-acid chain: CTP synthase (539 aa).

Residues 1 to 267 are amidoligase domain; sequence MTKYIFVTGG…DQKVCDFLHL (267 aa). Ser13 is a binding site for CTP. Ser13 is a binding site for UTP. 14–19 contributes to the ATP binding site; sequence SLGKGI. Tyr54 is a binding site for L-glutamine. Asp71 is an ATP binding site. Residues Asp71 and Glu141 each coordinate Mg(2+). Residues 148–150, 188–193, and Lys224 contribute to the CTP site; these read DIE and KTKPTQ. Residues 188–193 and Lys224 each bind UTP; that span reads KTKPTQ. Residues 294–537 enclose the Glutamine amidotransferase type-1 domain; the sequence is KITLVGKYVE…IGAASGLPAQ (244 aa). An L-glutamine-binding site is contributed by Gly356. Cys383 serves as the catalytic Nucleophile; for glutamine hydrolysis. Residues 384–387, Glu407, and Arg465 each bind L-glutamine; that span reads LGMQ. Active-site residues include His510 and Glu512.

This sequence belongs to the CTP synthase family. As to quaternary structure, homotetramer.

The catalysed reaction is UTP + L-glutamine + ATP + H2O = CTP + L-glutamate + ADP + phosphate + 2 H(+). It catalyses the reaction L-glutamine + H2O = L-glutamate + NH4(+). The enzyme catalyses UTP + NH4(+) + ATP = CTP + ADP + phosphate + 2 H(+). It participates in pyrimidine metabolism; CTP biosynthesis via de novo pathway; CTP from UDP: step 2/2. With respect to regulation, allosterically activated by GTP, when glutamine is the substrate; GTP has no effect on the reaction when ammonia is the substrate. The allosteric effector GTP functions by stabilizing the protein conformation that binds the tetrahedral intermediate(s) formed during glutamine hydrolysis. Inhibited by the product CTP, via allosteric rather than competitive inhibition. Catalyzes the ATP-dependent amination of UTP to CTP with either L-glutamine or ammonia as the source of nitrogen. Regulates intracellular CTP levels through interactions with the four ribonucleotide triphosphates. This Lactobacillus acidophilus (strain ATCC 700396 / NCK56 / N2 / NCFM) protein is CTP synthase.